The chain runs to 367 residues: Quinolinate synthase (367 aa).

Iminosuccinate contacts are provided by histidine 45 and serine 62. Cysteine 109 lines the [4Fe-4S] cluster pocket. Residues 140–142 and serine 161 contribute to the iminosuccinate site; that span reads YVN. Cysteine 229 is a binding site for [4Fe-4S] cluster. Residues 255 to 257 and threonine 272 each bind iminosuccinate; that span reads HPE. Cysteine 319 provides a ligand contact to [4Fe-4S] cluster.

The protein belongs to the quinolinate synthase family. Type 3 subfamily. It depends on [4Fe-4S] cluster as a cofactor.

The protein localises to the cytoplasm. It carries out the reaction iminosuccinate + dihydroxyacetone phosphate = quinolinate + phosphate + 2 H2O + H(+). Its pathway is cofactor biosynthesis; NAD(+) biosynthesis; quinolinate from iminoaspartate: step 1/1. Functionally, catalyzes the condensation of iminoaspartate with dihydroxyacetone phosphate to form quinolinate. This is Quinolinate synthase from Lysinibacillus sphaericus (strain C3-41).